We begin with the raw amino-acid sequence, 311 residues long: HTH-type transcriptional regulator PcaQ (311 aa).

One can recognise an HTH lysR-type domain in the interval 6 to 63; the sequence is IKFRHLQTFVEVARQKSVIRAAEILHVSQPAVTKTIRELEDVLGVSLLEREGRGIRIS. Residues 23–42 constitute a DNA-binding region (H-T-H motif); the sequence is VIRAAEILHVSQPAVTKTIR.

The protein belongs to the LysR transcriptional regulatory family.

Functionally, activates transcription of the pcaDCHGB operon for the catabolism of the phenolic compound protocatechuate. The polypeptide is HTH-type transcriptional regulator PcaQ (pcaQ) (Agrobacterium fabrum (strain C58 / ATCC 33970) (Agrobacterium tumefaciens (strain C58))).